Reading from the N-terminus, the 298-residue chain is MKNRTFSVFYRKYEQILEKEILSSEIPEHIAVIMDGNRRYAGQLGKARIFGHAMGAEVTEQVIEWCYEIGVKQLTLYAFSTENFQRSEEEVGGLFNLINEKFLKLHTDKRTYEKEMQVRVIGDRTKLPAYLNESIDRIEKATEHHRKFSLNVAIAYGGRQDIMQAVRDIATCVSSGKLSLEDVNESLISKHLYPAPGVPVPNVDLIIRTGGDERISNFLPWQANGSECATYFCAPFWPEFRKIDLLRSVRVYQARKEEKKREHSYRISKVKNFLRVGKYENKSEDLGQLLPLKKQGVS.

Residue Asp35 is part of the active site. Asp35 contacts Mg(2+). Residues 36 to 39, Arg48, His52, and 80 to 82 each bind substrate; these read GNRR and STE. The active-site Proton acceptor is Asn83. Substrate is bound by residues Phe84, Arg86, Arg208, and 214–216; that span reads RIS.

Belongs to the UPP synthase family. In terms of assembly, homodimer. It depends on Mg(2+) as a cofactor.

The catalysed reaction is geranylgeranyl diphosphate + 7 isopentenyl diphosphate = tri-trans,hepta-cis-undecaprenyl diphosphate + 7 diphosphate. Functionally, catalyzes the sequential condensation of isopentenyl diphosphate (IPP) with geranylgeranyl diphosphate (GGPP) to yield (2Z,6Z,10Z,14Z,18Z,22Z,26Z,30E,34E,38E)-undecaprenyl diphosphate (tritrans,heptacis-UPP). It is probably the precursor of glycosyl carrier lipids. In Methanosarcina mazei (strain ATCC BAA-159 / DSM 3647 / Goe1 / Go1 / JCM 11833 / OCM 88) (Methanosarcina frisia), this protein is Tritrans,polycis-undecaprenyl-diphosphate synthase (geranylgeranyl-diphosphate specific).